We begin with the raw amino-acid sequence, 127 residues long: Ribosome-binding factor A (127 aa).

Belongs to the RbfA family. Monomer. Binds 30S ribosomal subunits, but not 50S ribosomal subunits or 70S ribosomes.

Its subcellular location is the cytoplasm. One of several proteins that assist in the late maturation steps of the functional core of the 30S ribosomal subunit. Associates with free 30S ribosomal subunits (but not with 30S subunits that are part of 70S ribosomes or polysomes). Required for efficient processing of 16S rRNA. May interact with the 5'-terminal helix region of 16S rRNA. The protein is Ribosome-binding factor A of Actinobacillus pleuropneumoniae serotype 7 (strain AP76).